The following is a 348-amino-acid chain: Protein pelota homolog (348 aa).

The protein belongs to the eukaryotic release factor 1 family. Pelota subfamily. As to quaternary structure, monomer. A divalent metal cation serves as cofactor.

The protein localises to the cytoplasm. Its function is as follows. May function in recognizing stalled ribosomes, interact with stem-loop structures in stalled mRNA molecules, and effect endonucleolytic cleavage of the mRNA. May play a role in the release non-functional ribosomes and degradation of damaged mRNAs. Has endoribonuclease activity. The protein is Protein pelota homolog of Methanococcus maripaludis (strain DSM 14266 / JCM 13030 / NBRC 101832 / S2 / LL).